We begin with the raw amino-acid sequence, 197 residues long: Holliday junction branch migration complex subunit RuvA (197 aa).

The interval 1–64 (MIDSIVGIIQ…LSELECYGFL (64 aa)) is domain I. The interval 65–143 (TREERELFLK…KEFKVASTSG (79 aa)) is domain II. The segment at 144–152 (KEEKTYEKL) is flexible linker. The tract at residues 152–197 (LEEISLALLSLGYDIDEVNQVLSSEDFSELSLEDGIKLALKKLSKI) is domain III.

The protein belongs to the RuvA family. In terms of assembly, homotetramer. Forms an RuvA(8)-RuvB(12)-Holliday junction (HJ) complex. HJ DNA is sandwiched between 2 RuvA tetramers; dsDNA enters through RuvA and exits via RuvB. An RuvB hexamer assembles on each DNA strand where it exits the tetramer. Each RuvB hexamer is contacted by two RuvA subunits (via domain III) on 2 adjacent RuvB subunits; this complex drives branch migration. In the full resolvosome a probable DNA-RuvA(4)-RuvB(12)-RuvC(2) complex forms which resolves the HJ.

The protein resides in the cytoplasm. In terms of biological role, the RuvA-RuvB-RuvC complex processes Holliday junction (HJ) DNA during genetic recombination and DNA repair, while the RuvA-RuvB complex plays an important role in the rescue of blocked DNA replication forks via replication fork reversal (RFR). RuvA specifically binds to HJ cruciform DNA, conferring on it an open structure. The RuvB hexamer acts as an ATP-dependent pump, pulling dsDNA into and through the RuvAB complex. HJ branch migration allows RuvC to scan DNA until it finds its consensus sequence, where it cleaves and resolves the cruciform DNA. In Caldicellulosiruptor bescii (strain ATCC BAA-1888 / DSM 6725 / KCTC 15123 / Z-1320) (Anaerocellum thermophilum), this protein is Holliday junction branch migration complex subunit RuvA.